The following is a 132-amino-acid chain: Interleukin-13 (132 aa).

Residues 1-18 form the signal peptide; the sequence is MALLLTTVIALTCLGGFA. N-linked (GlcNAc...) asparagine glycans are attached at residues Asn38, Asn49, Asn57, and Asn72. 2 disulfides stabilise this stretch: Cys48–Cys76 and Cys64–Cys90.

It belongs to the IL-4/IL-13 family. As to quaternary structure, interacts with IL13RA2.

It is found in the secreted. Its function is as follows. Cytokine that plays important roles in allergic inflammation and immune response to parasite infection. Synergizes with IL2 in regulating interferon-gamma synthesis. Stimulates B-cell proliferation, and activation of eosinophils, basophils, and mast cells. Plays an important role in controlling IL33 activity by modulating the production of transmembrane and soluble forms of interleukin-1 receptor-like 1/IL1RL1. Displays the capacity to antagonize Th1-driven proinflammatory immune response and downregulates synthesis of many proinflammatory cytokines including IL1, IL6, IL10, IL12 and TNF-alpha through a mechanism that partially involves suppression of NF-kappa-B. Also functions on nonhematopoietic cells, including endothelial cells where it induces vascular cell adhesion protein 1/VCAM1, which is important in the recruitment of eosinophils. Exerts its biological effects through its receptors which comprises the IL4R chain and the IL13RA1 chain, to activate JAK1 and TYK2, leading to the activation of STAT6. Aside from IL13RA1, another receptor IL13RA2 acts as a high affinity decoy for IL13 and mediates internalization and depletion of extracellular IL13. The protein is Interleukin-13 (IL13) of Macaca mulatta (Rhesus macaque).